The chain runs to 387 residues: Arginine biosynthesis bifunctional protein ArgJ 2 (387 aa).

Substrate is bound by residues Thr147, Lys169, Thr180, Glu259, Asn382, and Thr387. The active-site Nucleophile is the Thr180.

It belongs to the ArgJ family. As to quaternary structure, heterotetramer of two alpha and two beta chains.

It is found in the cytoplasm. The enzyme catalyses N(2)-acetyl-L-ornithine + L-glutamate = N-acetyl-L-glutamate + L-ornithine. The catalysed reaction is L-glutamate + acetyl-CoA = N-acetyl-L-glutamate + CoA + H(+). The protein operates within amino-acid biosynthesis; L-arginine biosynthesis; L-ornithine and N-acetyl-L-glutamate from L-glutamate and N(2)-acetyl-L-ornithine (cyclic): step 1/1. Its pathway is amino-acid biosynthesis; L-arginine biosynthesis; N(2)-acetyl-L-ornithine from L-glutamate: step 1/4. In terms of biological role, catalyzes two activities which are involved in the cyclic version of arginine biosynthesis: the synthesis of N-acetylglutamate from glutamate and acetyl-CoA as the acetyl donor, and of ornithine by transacetylation between N(2)-acetylornithine and glutamate. This chain is Arginine biosynthesis bifunctional protein ArgJ 2, found in Nostoc sp. (strain PCC 7120 / SAG 25.82 / UTEX 2576).